A 332-amino-acid polypeptide reads, in one-letter code: Endo-1,4-beta-xylanase (332 aa).

Positions methionine 1–alanine 21 are cleaved as a signal peptide. The GH10 domain maps to lysine 26–alanine 316. Glutamate 120 functions as the Proton donor in the catalytic mechanism. Cysteines 128 and 160 form a disulfide. The active-site Nucleophile is the glutamate 214. The cysteines at positions 247 and 253 are disulfide-linked.

The protein belongs to the glycosyl hydrolase 10 (cellulase F) family.

It is found in the secreted. The catalysed reaction is Endohydrolysis of (1-&gt;4)-beta-D-xylosidic linkages in xylans.. Requires at least three xylose residues for catalytic activity. Does not have activity against xylobiose. The chain is Endo-1,4-beta-xylanase from Naganishia albida (Cryptococcus albidus).